The chain runs to 468 residues: UDP-N-acetylmuramoyl-L-alanine--L-glutamate ligase (468 aa).

122 to 128 (GTKGKST) is an ATP binding site.

This sequence belongs to the MurCDEF family. MurD2 subfamily.

The protein localises to the cytoplasm. It catalyses the reaction UDP-N-acetyl-alpha-D-muramoyl-L-alanine + L-glutamate + ATP = UDP-N-acetyl-alpha-D-muramoyl-L-alanyl-L-glutamate + ADP + phosphate + H(+). It participates in cell wall biogenesis; peptidoglycan biosynthesis. Cell wall formation. Catalyzes the addition of L-glutamate to the nucleotide precursor UDP-N-acetylmuramoyl-L-alanine. In Xanthomonas euvesicatoria pv. vesicatoria (strain 85-10) (Xanthomonas campestris pv. vesicatoria), this protein is UDP-N-acetylmuramoyl-L-alanine--L-glutamate ligase.